Here is a 205-residue protein sequence, read N- to C-terminus: G-protein coupled receptor (205 aa).

A run of 5 helical transmembrane segments spans residues 40–60, 71–91, 107–127, 151–171, and 185–205; these read GITLTASVPMIIIVITTMILY, FYVITLFASDFVLMWCVFFMT, LVYFIYHAVCSYSISMLAIIA, IGILLLASSMCAIPTALFVQI, and LSSPKAYELFLAVKIVFSFIW. The cysteines at positions 105 and 181 are disulfide-linked.

It belongs to the G-protein coupled receptor 1 family.

The protein localises to the host membrane. This Human herpesvirus 6B (strain Z29) (HHV-6 variant B) protein is G-protein coupled receptor (U12).